The sequence spans 202 residues: Small ribosomal subunit protein uS4c (202 aa).

The region spanning 90–150 is the S4 RNA-binding domain; it reads MRLDNVIFRL…NQRKSQAIIN (61 aa).

Belongs to the universal ribosomal protein uS4 family. Part of the 30S ribosomal subunit. Contacts protein S5. The interaction surface between S4 and S5 is involved in control of translational fidelity.

The protein localises to the plastid. The protein resides in the chloroplast. Its function is as follows. One of the primary rRNA binding proteins, it binds directly to 16S rRNA where it nucleates assembly of the body of the 30S subunit. In terms of biological role, with S5 and S12 plays an important role in translational accuracy. This is Small ribosomal subunit protein uS4c (rps4) from Canalohypopterygium tamariscinum (Moss).